The sequence spans 315 residues: 4-hydroxy-3-methylbut-2-enyl diphosphate reductase (315 aa).

[4Fe-4S] cluster is bound at residue C12. (2E)-4-hydroxy-3-methylbut-2-enyl diphosphate is bound by residues H43 and H81. Residues H43 and H81 each contribute to the dimethylallyl diphosphate site. Residues H43 and H81 each coordinate isopentenyl diphosphate. A [4Fe-4S] cluster-binding site is contributed by C103. H131 is a binding site for (2E)-4-hydroxy-3-methylbut-2-enyl diphosphate. H131 contributes to the dimethylallyl diphosphate binding site. H131 provides a ligand contact to isopentenyl diphosphate. The Proton donor role is filled by E133. Residue T172 coordinates (2E)-4-hydroxy-3-methylbut-2-enyl diphosphate. [4Fe-4S] cluster is bound at residue C200. Residues S228, N230, and S273 each contribute to the (2E)-4-hydroxy-3-methylbut-2-enyl diphosphate site. Residues S228, N230, and S273 each contribute to the dimethylallyl diphosphate site. Positions 228, 230, and 273 each coordinate isopentenyl diphosphate.

This sequence belongs to the IspH family. The cofactor is [4Fe-4S] cluster.

It catalyses the reaction isopentenyl diphosphate + 2 oxidized [2Fe-2S]-[ferredoxin] + H2O = (2E)-4-hydroxy-3-methylbut-2-enyl diphosphate + 2 reduced [2Fe-2S]-[ferredoxin] + 2 H(+). The catalysed reaction is dimethylallyl diphosphate + 2 oxidized [2Fe-2S]-[ferredoxin] + H2O = (2E)-4-hydroxy-3-methylbut-2-enyl diphosphate + 2 reduced [2Fe-2S]-[ferredoxin] + 2 H(+). It functions in the pathway isoprenoid biosynthesis; dimethylallyl diphosphate biosynthesis; dimethylallyl diphosphate from (2E)-4-hydroxy-3-methylbutenyl diphosphate: step 1/1. It participates in isoprenoid biosynthesis; isopentenyl diphosphate biosynthesis via DXP pathway; isopentenyl diphosphate from 1-deoxy-D-xylulose 5-phosphate: step 6/6. Catalyzes the conversion of 1-hydroxy-2-methyl-2-(E)-butenyl 4-diphosphate (HMBPP) into a mixture of isopentenyl diphosphate (IPP) and dimethylallyl diphosphate (DMAPP). Acts in the terminal step of the DOXP/MEP pathway for isoprenoid precursor biosynthesis. This Exiguobacterium sibiricum (strain DSM 17290 / CCUG 55495 / CIP 109462 / JCM 13490 / 255-15) protein is 4-hydroxy-3-methylbut-2-enyl diphosphate reductase.